We begin with the raw amino-acid sequence, 293 residues long: MAWVQIRLNSTDKQAEQISDFLEEIGAVSVTFMDSQDTPIFEPLPGETRLWGNTDVVGLFDAETDMKAIVEALIASRLVEADFAHKIEQIEDKDWEREWMDNFHPMQFGKRLWICPSWREVPDSNAVNVMLDPGLAFGTGTHPTTALCLQWLDSLDLTGKTVIDFGCGSGILAIAALKLGAKQAIGIDIDPQAILASGNNAEANGVADRLQLFLAKDQPQDLQADVVVANILAGPLKELAPNIITLVKPQGDLGLSGILATQAESVCEAYAPDFNLDSVVEKEEWCRITGVKK.

Threonine 145, glycine 166, aspartate 188, and asparagine 230 together coordinate S-adenosyl-L-methionine.

The protein belongs to the methyltransferase superfamily. PrmA family.

The protein resides in the cytoplasm. The enzyme catalyses L-lysyl-[protein] + 3 S-adenosyl-L-methionine = N(6),N(6),N(6)-trimethyl-L-lysyl-[protein] + 3 S-adenosyl-L-homocysteine + 3 H(+). Methylates ribosomal protein L11. This chain is Ribosomal protein L11 methyltransferase, found in Actinobacillus pleuropneumoniae serotype 3 (strain JL03).